Reading from the N-terminus, the 499-residue chain is Putative DBH-like monooxygenase protein 2 (499 aa).

A signal peptide spans 1 to 16; the sequence is MAHDLLFRLFPLLALG. One can recognise a DOMON domain in the interval 40–156; it reads NVIFLRWDFD…NTVRVLAAYG (117 aa). The active site involves Tyr-209. 2 disulfide bridges follow: Cys-211–Cys-261 and Cys-248–Cys-271. N-linked (GlcNAc...) asparagine glycosylation is present at Asn-236. Cu cation is bound by residues His-241 and His-242. Asn-250 carries an N-linked (GlcNAc...) asparagine glycan. Positions 308, 389, and 391 each coordinate Cu cation. 2 disulfide bridges follow: Cys-365/Cys-480 and Cys-443/Cys-465. Residue His-389 is part of the active site. Asn-404 is a glycosylation site (N-linked (GlcNAc...) asparagine). Met-464 is a Cu cation binding site. A glycan (N-linked (GlcNAc...) asparagine) is linked at Asn-476.

This sequence belongs to the copper type II ascorbate-dependent monooxygenase family. Cu(2+) serves as cofactor.

This chain is Putative DBH-like monooxygenase protein 2 (MOXD2P), found in Homo sapiens (Human).